Reading from the N-terminus, the 529-residue chain is Bifunctional purine biosynthesis protein PurH (529 aa).

The 148-residue stretch at 1 to 148 (MQPPRPVRRA…KNHKDVAIVV (148 aa)) folds into the MGS-like domain.

The protein belongs to the PurH family.

The catalysed reaction is (6R)-10-formyltetrahydrofolate + 5-amino-1-(5-phospho-beta-D-ribosyl)imidazole-4-carboxamide = 5-formamido-1-(5-phospho-D-ribosyl)imidazole-4-carboxamide + (6S)-5,6,7,8-tetrahydrofolate. It catalyses the reaction IMP + H2O = 5-formamido-1-(5-phospho-D-ribosyl)imidazole-4-carboxamide. It functions in the pathway purine metabolism; IMP biosynthesis via de novo pathway; 5-formamido-1-(5-phospho-D-ribosyl)imidazole-4-carboxamide from 5-amino-1-(5-phospho-D-ribosyl)imidazole-4-carboxamide (10-formyl THF route): step 1/1. Its pathway is purine metabolism; IMP biosynthesis via de novo pathway; IMP from 5-formamido-1-(5-phospho-D-ribosyl)imidazole-4-carboxamide: step 1/1. The polypeptide is Bifunctional purine biosynthesis protein PurH (Sodalis glossinidius (strain morsitans)).